The sequence spans 989 residues: Phosphoenolpyruvate carboxylase (989 aa).

Residues His175 and Lys630 contribute to the active site.

This sequence belongs to the PEPCase type 1 family. It depends on Mg(2+) as a cofactor.

The enzyme catalyses oxaloacetate + phosphate = phosphoenolpyruvate + hydrogencarbonate. Functionally, forms oxaloacetate, a four-carbon dicarboxylic acid source for the tricarboxylic acid cycle. The chain is Phosphoenolpyruvate carboxylase from Prochlorococcus marinus (strain AS9601).